We begin with the raw amino-acid sequence, 205 residues long: Ribosomal RNA small subunit methyltransferase G (205 aa).

Residues Gly-76, Leu-81, Ile-127–Glu-128, and Arg-140 each bind S-adenosyl-L-methionine.

Belongs to the methyltransferase superfamily. RNA methyltransferase RsmG family.

The protein localises to the cytoplasm. The catalysed reaction is guanosine(527) in 16S rRNA + S-adenosyl-L-methionine = N(7)-methylguanosine(527) in 16S rRNA + S-adenosyl-L-homocysteine. In terms of biological role, specifically methylates the N7 position of guanine in position 527 of 16S rRNA. The polypeptide is Ribosomal RNA small subunit methyltransferase G (Francisella tularensis subsp. tularensis (strain WY96-3418)).